A 330-amino-acid polypeptide reads, in one-letter code: G-protein coupled receptor 3 (330 aa).

Residues 1-42 lie on the Extracellular side of the membrane; the sequence is MMWGAGSSMAWFSAGSGSVNVSSVDPVEEPTGPATLLPSPRA. An N-linked (GlcNAc...) asparagine glycan is attached at N20. The chain crosses the membrane as a helical span at residues 43 to 62; that stretch reads WDVVLCISGTLVSCENALVV. Topologically, residues 63–74 are cytoplasmic; that stretch reads AIIVGTPAFRAP. The helical transmembrane segment at 75-98 threads the bilayer; it reads MFLLVGSLAVADLLAGLGLVLHFA. The Extracellular portion of the chain corresponds to 99–110; that stretch reads ADFCIGSPEMSL. A helical membrane pass occupies residues 111–132; the sequence is MLVGVLAMAFTASIGSLLAITV. Residues 133–153 are Cytoplasmic-facing; that stretch reads DRYLSLYNALTYYSETTVTRT. A helical membrane pass occupies residues 154-173; that stretch reads YVMLALVWVGALGLGLVPVL. Residues 174-198 lie on the Extracellular side of the membrane; the sequence is AWNCRDGLTTCGVVYPLSKNHLVVL. The chain crosses the membrane as a helical span at residues 199 to 217; it reads AIAFFMVFGIMLQLYAQIC. Residues 218-245 are Cytoplasmic-facing; sequence RIVCRHAQQIALQRHLLPASHYVATRKG. Residues 246–272 form a helical membrane-spanning segment; the sequence is IATLAVVLGAFAACWLPFTVYCLLGDA. Residues 273–277 are Extracellular-facing; that stretch reads DSPRL. Residues 278–299 form a helical membrane-spanning segment; that stretch reads YTYLTLLPATYNSMINPVIYAF. The Cytoplasmic segment spans residues 300-330; the sequence is RNQDVQKVLWAICCCCSTSKIPFRSRSPSDV. C313 is lipidated: S-palmitoyl cysteine. 3 positions are modified to phosphoserine: S324, S326, and S328.

Belongs to the G-protein coupled receptor 1 family. In terms of tissue distribution, expressed in both the forebrain and hindbrain, with the highest level in habenula. Lower level expression in the testis. Expressed in several metabolically active peripheral tissues, although at lower levels than in the central nervous system (CNS).

The protein resides in the cell membrane. Functionally, constitutively active G-protein coupled receptor that maintains high 3'-5'-cyclic adenosine monophosphate (cAMP) levels that a plays a role in serveral processes including meiotic arrest in oocytes or neuronal development via activation of numerous intracellular signaling pathways. Acts as an essential activator of thermogenic adipocytes and drives thermogenesis via its intrinsic G(s)-coupling activity without the requirement of a ligand. Has a potential role in modulating a number of brain functions, including behavioral responses to stress, amyloid-beta peptide generation in neurons. Stimulates neurite outgrowth in cerebellar granular neurons modulated via PKA, ERK, and most strongly PI3K-mediated signaling pathways. The protein is G-protein coupled receptor 3 (Gpr3) of Mus musculus (Mouse).